Reading from the N-terminus, the 64-residue chain is Large ribosomal subunit protein bL35 (64 aa).

A compositionally biased stretch (basic residues) spans 1 to 45 (MPKMKTHKGAAKRFKKTGKGKIKRRKAFKSHILTKKTPKRKRNLR). The disordered stretch occupies residues 1-64 (MPKMKTHKGA…EEKRIKRLLP (64 aa)).

It belongs to the bacterial ribosomal protein bL35 family.

The protein is Large ribosomal subunit protein bL35 of Natranaerobius thermophilus (strain ATCC BAA-1301 / DSM 18059 / JW/NM-WN-LF).